We begin with the raw amino-acid sequence, 204 residues long: Holliday junction branch migration complex subunit RuvA (204 aa).

The tract at residues 1–64 (MIGKLKGTIE…EDQIRLFGFM (64 aa)) is domain I. The domain II stretch occupies residues 65 to 143 (AVLEREWFNL…AFAGEATNIG (79 aa)). Residues 144 to 151 (FKQELGEG) form a flexible linker region. Residues 152 to 204 (VAPAPVSDAVSALTNLGYSRDQAANAIAAAMKVAGDEADSAKLIRLGLKELSR) form a domain III region.

This sequence belongs to the RuvA family. As to quaternary structure, homotetramer. Forms an RuvA(8)-RuvB(12)-Holliday junction (HJ) complex. HJ DNA is sandwiched between 2 RuvA tetramers; dsDNA enters through RuvA and exits via RuvB. An RuvB hexamer assembles on each DNA strand where it exits the tetramer. Each RuvB hexamer is contacted by two RuvA subunits (via domain III) on 2 adjacent RuvB subunits; this complex drives branch migration. In the full resolvosome a probable DNA-RuvA(4)-RuvB(12)-RuvC(2) complex forms which resolves the HJ.

It localises to the cytoplasm. Functionally, the RuvA-RuvB-RuvC complex processes Holliday junction (HJ) DNA during genetic recombination and DNA repair, while the RuvA-RuvB complex plays an important role in the rescue of blocked DNA replication forks via replication fork reversal (RFR). RuvA specifically binds to HJ cruciform DNA, conferring on it an open structure. The RuvB hexamer acts as an ATP-dependent pump, pulling dsDNA into and through the RuvAB complex. HJ branch migration allows RuvC to scan DNA until it finds its consensus sequence, where it cleaves and resolves the cruciform DNA. In Rhizobium rhizogenes (strain K84 / ATCC BAA-868) (Agrobacterium radiobacter), this protein is Holliday junction branch migration complex subunit RuvA.